A 1092-amino-acid chain; its full sequence is DNA polymerase II large subunit (1092 aa).

This sequence belongs to the archaeal DNA polymerase II family. As to quaternary structure, heterodimer of a large subunit and a small subunit.

The enzyme catalyses DNA(n) + a 2'-deoxyribonucleoside 5'-triphosphate = DNA(n+1) + diphosphate. The catalysed reaction is Exonucleolytic cleavage in the 3'- to 5'-direction to yield nucleoside 5'-phosphates.. Its function is as follows. Possesses two activities: a DNA synthesis (polymerase) and an exonucleolytic activity that degrades single-stranded DNA in the 3'- to 5'-direction. Has a template-primer preference which is characteristic of a replicative DNA polymerase. This Methanothermobacter thermautotrophicus (strain ATCC 29096 / DSM 1053 / JCM 10044 / NBRC 100330 / Delta H) (Methanobacterium thermoautotrophicum) protein is DNA polymerase II large subunit (polC).